The chain runs to 152 residues: Large ribosomal subunit protein uL15 (152 aa).

The segment at 1–56 (MELNTLKPAKNSVKQNTRYGRGQGSGKGGTSTRGHKGAKSRSGYKSKPGFEGGQLP) is disordered. The segment covering 21–31 (RGQGSGKGGTS) has biased composition (gly residues). The segment covering 33-44 (RGHKGAKSRSGY) has biased composition (basic residues).

It belongs to the universal ribosomal protein uL15 family. In terms of assembly, part of the 50S ribosomal subunit.

In terms of biological role, binds to the 23S rRNA. The chain is Large ribosomal subunit protein uL15 from Amoebophilus asiaticus (strain 5a2).